Consider the following 149-residue polypeptide: FAD synthase (149 aa).

ATP-binding positions include valine 9–phenylalanine 10, histidine 14–histidine 17, aspartate 93, and tyrosine 120.

Belongs to the archaeal FAD synthase family. As to quaternary structure, homodimer. Requires a divalent metal cation as cofactor.

It carries out the reaction FMN + ATP + H(+) = FAD + diphosphate. Its pathway is cofactor biosynthesis; FAD biosynthesis; FAD from FMN: step 1/1. Its function is as follows. Catalyzes the transfer of the AMP portion of ATP to flavin mononucleotide (FMN) to produce flavin adenine dinucleotide (FAD) coenzyme. The sequence is that of FAD synthase from Aciduliprofundum boonei (strain DSM 19572 / T469).